The chain runs to 271 residues: MPELPEVEVTRQGVSPYLIDQEVTGLTVRNASLRWPVPDLAQQIVGQTIRSVHRRAKYLLIDTDAGTTIVHLGMSGSLRVVTELTPVEKHDHIDLSLASGKILRFNDPRRFGAWLWYELPIDAHPLLSKLGPEPLTDAFNPSYLFESLKGKKKAIKLCLMDNHIVVGVGNIYANEALFAAGIHPQMEAGKVDQERLIILVSEVKQILANAIKQGGTTLKDFTNAEGKPGYFAQKLHVYGRGGESCTQCGNLLSEIKLGQRATVFCGLCQTR.

P2 serves as the catalytic Schiff-base intermediate with DNA. E3 functions as the Proton donor in the catalytic mechanism. K57 acts as the Proton donor; for beta-elimination activity in catalysis. H90, R109, and K151 together coordinate DNA. Residues 236–270 (HVYGRGGESCTQCGNLLSEIKLGQRATVFCGLCQT) form an FPG-type zinc finger. R260 functions as the Proton donor; for delta-elimination activity in the catalytic mechanism.

Belongs to the FPG family. Monomer. Zn(2+) is required as a cofactor.

It catalyses the reaction Hydrolysis of DNA containing ring-opened 7-methylguanine residues, releasing 2,6-diamino-4-hydroxy-5-(N-methyl)formamidopyrimidine.. It carries out the reaction 2'-deoxyribonucleotide-(2'-deoxyribose 5'-phosphate)-2'-deoxyribonucleotide-DNA = a 3'-end 2'-deoxyribonucleotide-(2,3-dehydro-2,3-deoxyribose 5'-phosphate)-DNA + a 5'-end 5'-phospho-2'-deoxyribonucleoside-DNA + H(+). In terms of biological role, involved in base excision repair of DNA damaged by oxidation or by mutagenic agents. Acts as a DNA glycosylase that recognizes and removes damaged bases. Has a preference for oxidized purines, such as 7,8-dihydro-8-oxoguanine (8-oxoG). Has AP (apurinic/apyrimidinic) lyase activity and introduces nicks in the DNA strand. Cleaves the DNA backbone by beta-delta elimination to generate a single-strand break at the site of the removed base with both 3'- and 5'-phosphates. This is Formamidopyrimidine-DNA glycosylase from Shewanella woodyi (strain ATCC 51908 / MS32).